Reading from the N-terminus, the 341-residue chain is Anthranilate phosphoribosyltransferase (341 aa).

5-phospho-alpha-D-ribose 1-diphosphate contacts are provided by residues G79, 82–83, T87, 89–92, 107–115, and S119; these read GD, NIST, and KHGNRAVSS. G79 serves as a coordination point for anthranilate. S91 is a Mg(2+) binding site. N110 provides a ligand contact to anthranilate. R165 contributes to the anthranilate binding site. Mg(2+)-binding residues include D224 and E225.

Belongs to the anthranilate phosphoribosyltransferase family. Homodimer. Mg(2+) serves as cofactor.

It catalyses the reaction N-(5-phospho-beta-D-ribosyl)anthranilate + diphosphate = 5-phospho-alpha-D-ribose 1-diphosphate + anthranilate. Its pathway is amino-acid biosynthesis; L-tryptophan biosynthesis; L-tryptophan from chorismate: step 2/5. Functionally, catalyzes the transfer of the phosphoribosyl group of 5-phosphorylribose-1-pyrophosphate (PRPP) to anthranilate to yield N-(5'-phosphoribosyl)-anthranilate (PRA). The polypeptide is Anthranilate phosphoribosyltransferase (Bacillus cereus (strain B4264)).